A 188-amino-acid chain; its full sequence is dCTP deaminase (188 aa).

Residues Lys-111–Arg-116, Thr-135–Glu-137, Gln-156, Tyr-170, Lys-179, and Gln-180 contribute to the dCTP site. Glu-137 acts as the Proton donor/acceptor in catalysis.

Belongs to the dCTP deaminase family. As to quaternary structure, homotrimer.

The catalysed reaction is dCTP + H2O + H(+) = dUTP + NH4(+). Its pathway is pyrimidine metabolism; dUMP biosynthesis; dUMP from dCTP (dUTP route): step 1/2. Catalyzes the deamination of dCTP to dUTP. The chain is dCTP deaminase from Rickettsia africae (strain ESF-5).